The following is a 275-amino-acid chain: Putative phosphoenolpyruvate synthase regulatory protein (275 aa).

An ADP-binding site is contributed by 157-164; that stretch reads GVSRCGKT.

The protein belongs to the pyruvate, phosphate/water dikinase regulatory protein family. PSRP subfamily.

It catalyses the reaction [pyruvate, water dikinase] + ADP = [pyruvate, water dikinase]-phosphate + AMP + H(+). It carries out the reaction [pyruvate, water dikinase]-phosphate + phosphate + H(+) = [pyruvate, water dikinase] + diphosphate. Functionally, bifunctional serine/threonine kinase and phosphorylase involved in the regulation of the phosphoenolpyruvate synthase (PEPS) by catalyzing its phosphorylation/dephosphorylation. This Bordetella pertussis (strain Tohama I / ATCC BAA-589 / NCTC 13251) protein is Putative phosphoenolpyruvate synthase regulatory protein.